The chain runs to 2024 residues: Pericentriolar material 1 protein (2024 aa).

Residues 1–92 are disordered; sequence MATGGGPFED…FPHSRYMSQM (92 aa). Residue Ala-2 is modified to N-acetylalanine. A mediates interaction with DZIP1 region spans residues 2–1460; the sequence is ATGGGPFEDG…TWIASNSELT (1459 aa). The span at 43–61 shows a compositional bias: basic and acidic residues; it reads RSSEKNKKKFGVESDKRVT. Phosphoserine is present on residues Ser-65, Ser-68, Ser-69, Ser-93, Ser-110, Ser-116, and Ser-119. A disordered region spans residues 111–163; it reads DLDQRSIGSDSQGRATAANNKRQLSENRKPFNFLPMQINTNKSKDASTNPPNR. Composition is skewed to polar residues over residues 116–132 and 147–163; these read SIGS…NNKR and QINT…PPNR. Asn-159 is modified (phosphoserine; in variant Ser-159). Residues 218-301 are a coiled coil; the sequence is KASSMREDLV…QLRALQGRQA (84 aa). Residues 354-392 form a disordered region; sequence RDSQPPAVPDNRRQAESLSLTREVSQSRKPSASERLPDE. Polar residues predominate over residues 369-383; the sequence is ESLSLTREVSQSRKP. Residue Ser-370 is modified to Phosphoserine. Position 372 is a phosphoserine; by PLK4 (Ser-372). Ser-384 carries the phosphoserine modification. N6-acetyllysine is present on Lys-399. The stretch at 400-424 forms a coiled coil; it reads MRVLQEKKQKMDKLLGELHTLRDQH. 2 disordered regions span residues 421–492 and 523–548; these read RDQH…KLQK and ENRK…VTNI. Composition is skewed to polar residues over residues 425–445 and 456–477; these read LNNS…SAPS and GESN…SQNE. Residues 487 to 543 adopt a coiled-coil conformation; that stretch reads SEKLQKLNEVRKRLNELRELVHYYEQTSDMMTDAVNENRKDEETEESEYDSEHENSE. Ser-588 carries the post-translational modification Phosphoserine. Disordered regions lie at residues 614-652 and 699-726; these read HVAQ…HPED and FYPA…DTGV. The span at 618–632 shows a compositional bias: acidic residues; it reads GEDDEEEEEEAEEEG. Low complexity predominate over residues 634 to 643; it reads SGASLSSHRS. Residue Ser-643 is modified to Phosphoserine. Residues 651–682 adopt a coiled-coil conformation; it reads EDAEFEQKINRLMAAKQKLRQLQDLVAMVQDD. Residues 708–719 are compositionally biased toward polar residues; that stretch reads QNSNNTRGNANK. 2 coiled-coil regions span residues 726 to 769 and 824 to 858; these read VNEK…LQTA and SEMR…GLAE. Thr-859 carries the phosphothreonine modification. Residues Ser-861, Ser-866, Ser-869, and Ser-872 each carry the phosphoserine modification. Thr-877 carries the post-translational modification Phosphothreonine. Residues 915–947 form a disordered region; that stretch reads TDEEEEEEQDASSNDNFSVCPSNSVNHNSYNGK. The segment covering 925 to 946 has biased composition (polar residues); it reads ASSNDNFSVCPSNSVNHNSYNG. Residues Ser-960, Ser-977, Ser-988, and Ser-991 each carry the phosphoserine modification. Positions 1063 to 1089 form a coiled coil; the sequence is TQLTWQQNNVQRLKQMLNELMRQQNQH. Disordered regions lie at residues 1085–1109 and 1152–1211; these read QQNQ…PSPS and FSQN…RTPW. The span at 1089–1099 shows a compositional bias: basic and acidic residues; sequence HPEKPGGKERG. Residues 1152–1173 are compositionally biased toward polar residues; sequence FSQNISTPSEQQQPLAQNSSGK. Residues Ser-1185 and Ser-1188 each carry the phosphoserine modification. Residues 1192-1201 show a composition bias toward basic and acidic residues; it reads EKPRNKKLPE. 2 positions are modified to phosphoserine: Ser-1229 and Ser-1231. Residues 1232 to 1246 are compositionally biased toward polar residues; the sequence is VEKSTSSNRKNQLDT. Positions 1232-1342 are disordered; that stretch reads VEKSTSSNRK…RHSAQTEEPV (111 aa). 4 positions are modified to phosphoserine: Ser-1257, Ser-1260, Ser-1262, and Ser-1263. The interaction with HAP1 stretch occupies residues 1279–1799; that stretch reads TRKASAQASL…TQALTNYGSG (521 aa). Residues 1296 to 1313 show a composition bias toward basic residues; that stretch reads KSKSKKRNSTQLKSRVKN. A phosphoserine mark is found at Ser-1318 and Ser-1320. Thr-1468 bears the Phosphothreonine mark. Positions 1515 to 1539 form a coiled coil; that stretch reads IHLDQALARMREYERMKTEAESNSN. Ser-1573, Ser-1697, Ser-1730, Ser-1765, Ser-1768, Ser-1776, and Ser-1782 each carry phosphoserine. 2 disordered regions span residues 1725-1868 and 1880-1944; these read LEDH…NNCP and EQPL…PVLV. Residues 1768 to 1777 show a composition bias toward acidic residues; it reads SDQEEDEESE. Residues 1783 to 1797 show a composition bias toward polar residues; the sequence is INLSKAETQALTNYG. Over residues 1799–1815 the composition is skewed to acidic residues; that stretch reads GEDENEDEEMEEFEEGP. The span at 1818 to 1827 shows a compositional bias: polar residues; that stretch reads VQTSLQANTE. Residues 1835-1860 are compositionally biased toward basic and acidic residues; the sequence is DEQVLQRDFKKTAESKNVPLEREATS. A compositionally biased stretch (low complexity) spans 1905–1916; that stretch reads PLRLPEMEPLVP. Residues 1913–2024 are interaction with BBS4; it reads PLVPRVKEVK…EPETVGAQSI (112 aa). Polar residues predominate over residues 1924–1933; that stretch reads AQETPESSLA. A phosphoserine mark is found at Ser-1958 and Ser-1977. The disordered stretch occupies residues 2005–2024; the sequence is ELAGNSETLKEPETVGAQSI.

It belongs to the PCM1 family. In terms of assembly, self-associates. Interacts with C2CD3. Interacts with BBS4, BBS8, CETN3, HAP1, NDE1, NDEL1, MAP1LC3B, GABARAPAL2, and GABARAP. Interacts with CEP131; the interaction increases in response to ultraviolet light (UV) radiation. Associates with microtubule; association to microtubule is reduced in response to cellular stress, such as ultraviolet light (UV) radiation or heat shock, in a process that requires p38 MAP kinase signaling. Interacts with CFAP263. Interacts with SSX2IP. Interacts with CCDC13. Interacts with CEP290. Interacts with PARD6A. Interacts with KIAA0753/OFIP, CEP20/FOR20 and OFD1; the interaction with CEP20/FOR20 and OFD1 may be mediated by KIAA0753/OFIP. Interacts with CCDC66. Interacts with CCDC61. Interacts with DZIP1; localizes DZIP1 and the associated BBSome to centriolar satellite. Interacts with CSTPP1, TTLL1, TPGS1 and LRRC49. Interacts with CFAP53. Post-translationally, ubiquitinated. Undergoes monoubiquitination catalyzed by the E3 ubiquitin-protein ligase MIB1 in proliferating cells, preventing cilia formation. Monoubiquitination by MIB1 is inhibited in response to cellular stress, such as ultraviolet light (UV) radiation or heat shock, resulting in cilia formation initiation. In terms of processing, variant Ser-159 is phosphorylated. Phosphorylated on multiple serine and threonine residues by DYRK3 during the G2-to-M transition, after the nuclear-envelope breakdown. Phosphorylation by DYRK3 promotes disassembly of pericentriolar material. Phosphorylation at Ser-372 mediated by PLK4 is required to maintain the integrity of centriolar satellites. As to expression, expressed in blood, bone marrow, breast, lymph node, ovary and thyroid.

The protein localises to the cytoplasm. Its subcellular location is the cytoskeleton. The protein resides in the microtubule organizing center. It is found in the centrosome. It localises to the cytoplasmic granule. The protein localises to the centriolar satellite. Its subcellular location is the cilium basal body. Its function is as follows. Required for centrosome assembly and function. Essential for the correct localization of several centrosomal proteins including CEP250, CETN3, PCNT and NEK2. Required to anchor microtubules to the centrosome. Also involved in cilium biogenesis by recruiting the BBSome, a ciliary protein complex involved in cilium biogenesis, to the centriolar satellites. Recruits the tubulin polyglutamylase complex (TPGC) to centriolar satellites. This chain is Pericentriolar material 1 protein, found in Homo sapiens (Human).